Consider the following 67-residue polypeptide: MKAKEIRDLTTEELRQKVNELKQELFNLRFQLATNQMDNPMRLKEVRRSIARAKTILRERELKQQRA.

This sequence belongs to the universal ribosomal protein uL29 family.

The polypeptide is Large ribosomal subunit protein uL29 (Moorella thermoacetica (strain ATCC 39073 / JCM 9320)).